Reading from the N-terminus, the 72-residue chain is Translation initiation factor IF-1 (72 aa).

An S1-like domain is found at 1-72 (MSKEELLEFP…TKGRITYRFK (72 aa)).

It belongs to the IF-1 family. As to quaternary structure, component of the 30S ribosomal translation pre-initiation complex which assembles on the 30S ribosome in the order IF-2 and IF-3, IF-1 and N-formylmethionyl-tRNA(fMet); mRNA recruitment can occur at any time during PIC assembly.

The protein resides in the cytoplasm. In terms of biological role, one of the essential components for the initiation of protein synthesis. Stabilizes the binding of IF-2 and IF-3 on the 30S subunit to which N-formylmethionyl-tRNA(fMet) subsequently binds. Helps modulate mRNA selection, yielding the 30S pre-initiation complex (PIC). Upon addition of the 50S ribosomal subunit IF-1, IF-2 and IF-3 are released leaving the mature 70S translation initiation complex. This Parvibaculum lavamentivorans (strain DS-1 / DSM 13023 / NCIMB 13966) protein is Translation initiation factor IF-1.